The sequence spans 462 residues: HEPACAM family member 2 (462 aa).

The N-terminal stretch at 1–31 (MGQDAFMEPFGDTLGVFQCKIYLLLFGACSG) is a signal peptide. N-linked (GlcNAc...) asparagine glycans are attached at residues Asn-85, Asn-129, and Asn-165. 2 consecutive Ig-like C2-type domains span residues 149–233 (PVVQ…SDII) and 235–331 (PIIY…THFT). 2 disulfides stabilise this stretch: Cys-170–Cys-219 and Cys-270–Cys-315. N-linked (GlcNAc...) asparagine glycosylation is present at Asn-320. A helical transmembrane segment spans residues 352 to 372 (LASITGISLFLIISMCLLFLW). Topologically, residues 373 to 462 (KKYQPYKVIK…IPAQQQDHPE (90 aa)) are cytoplasmic.

Post-translationally, poly-ADP-ribosylated (PARsylated) by tankyrase TNKS during late G2 and prophase, leading to translocation to mitotic centrosomes. In terms of processing, N-glycosylated. As to expression, widely expressed.

Its subcellular location is the golgi apparatus membrane. The protein localises to the cytoplasm. It is found in the cytoskeleton. The protein resides in the spindle. It localises to the microtubule organizing center. Its subcellular location is the centrosome. The protein localises to the midbody. In terms of biological role, required during prometaphase for centrosome maturation. Following poly-ADP-ribosylation (PARsylation) by TNKS, translocates from the Golgi apparatus to mitotic centrosomes and plays a key role in the formation of robust microtubules for prompt movement of chromosomes: anchors AKAP9/CG-NAP, a scaffold protein of the gamma-tubulin ring complex and promotes centrosome maturation. This chain is HEPACAM family member 2 (HEPACAM2), found in Homo sapiens (Human).